A 168-amino-acid polypeptide reads, in one-letter code: Plastocyanin, chloroplastic (168 aa).

A Plastocyanin-like domain is found at 70–168 (VEVLLGGGDG…AGMVGKVTVN (99 aa)). Cu cation is bound by residues histidine 106, cysteine 153, histidine 156, and methionine 161.

Belongs to the plastocyanin family. It depends on Cu(2+) as a cofactor.

It is found in the plastid. The protein localises to the chloroplast thylakoid membrane. Functionally, participates in electron transfer between P700 and the cytochrome b6-f complex in photosystem I. This chain is Plastocyanin, chloroplastic (PETE), found in Spinacia oleracea (Spinach).